The following is a 122-amino-acid chain: Probable dihydroneopterin aldolase (122 aa).

Substrate-binding positions include E21, Y54, and 73–74 (LE). K101 acts as the Proton donor/acceptor in catalysis.

Belongs to the DHNA family.

It catalyses the reaction 7,8-dihydroneopterin = 6-hydroxymethyl-7,8-dihydropterin + glycolaldehyde. It functions in the pathway cofactor biosynthesis; tetrahydrofolate biosynthesis; 2-amino-4-hydroxy-6-hydroxymethyl-7,8-dihydropteridine diphosphate from 7,8-dihydroneopterin triphosphate: step 3/4. In terms of biological role, catalyzes the conversion of 7,8-dihydroneopterin to 6-hydroxymethyl-7,8-dihydropterin. This chain is Probable dihydroneopterin aldolase (folB), found in Chlamydia muridarum (strain MoPn / Nigg).